A 317-amino-acid polypeptide reads, in one-letter code: Nucleoside ABC transporter permease protein NupC (317 aa).

The next 10 membrane-spanning stretches (helical) occupy residues 9 to 29, 35 to 55, 62 to 82, 98 to 118, 132 to 151, 155 to 172, 203 to 223, 225 to 245, 251 to 271, and 286 to 306; these read IIVANMLIYSTPLIFTSIGGV, GIVNVGLEGIMTIGAFSSVVF, MFGSMTPWLSILFGALIGALF, IVSGTVLNLMAPALGVFLLQV, GYWNVPLLSNIPVIGKIFFT, LPGFLAIVVAILAWYVLF, AGVLLSGVLGGVGGAIYAQAI, GNFSVSTIAGQGFISLAAMIF, IGAMLSSLLFGLFTSLAVVGG, and MAPYVFTIIVLALFLGKAIAP.

Belongs to the binding-protein-dependent transport system permease family. The complex is composed of two ATP-binding proteins (NupA), two transmembrane proteins (NupB and NupC) and a solute-binding protein (BmpA).

It is found in the cell membrane. Part of an ABC transporter complex involved in the uptake of all common nucleosides. Responsible for the translocation of the substrate across the membrane. The sequence is that of Nucleoside ABC transporter permease protein NupC from Lactococcus lactis subsp. cremoris (strain MG1363).